The sequence spans 494 residues: Ubiquitin carboxyl-terminal hydrolase 27 (494 aa).

The chain crosses the membrane as a helical span at residues 30-50 (LSFAGLLGVAGFVFAQQHGLF). The region spanning 74-494 (PGLQNLGNNC…EASLLFYERL (421 aa)) is the USP domain. The active-site Nucleophile is Cys83. Catalysis depends on His440, which acts as the Proton acceptor.

This sequence belongs to the peptidase C19 family.

The protein localises to the membrane. The enzyme catalyses Thiol-dependent hydrolysis of ester, thioester, amide, peptide and isopeptide bonds formed by the C-terminal Gly of ubiquitin (a 76-residue protein attached to proteins as an intracellular targeting signal).. In terms of biological role, recognizes and hydrolyzes the peptide bond at the C-terminal Gly of ubiquitin. Involved in the processing of poly-ubiquitin precursors as well as that of ubiquitinated proteins. This chain is Ubiquitin carboxyl-terminal hydrolase 27 (UBP27), found in Arabidopsis thaliana (Mouse-ear cress).